Here is a 573-residue protein sequence, read N- to C-terminus: Mitochondrial distribution and morphology protein 34 (573 aa).

The 195-residue stretch at 1–195 (MAFNFNWSPL…LPAIIHRLSL (195 aa)) folds into the SMP-LTD domain. Disordered stretches follow at residues 301–326 (EGLGSGLMSPGSPALSRTHSHISSPL), 349–433 (FSGY…RFPN), 499–521 (SREKSMEAQSSHGPNPGLSITDA), and 550–573 (LVNNNYPGPWEQTRARTPPPAYGQ). The span at 306 to 316 (GLMSPGSPALS) shows a compositional bias: low complexity. The span at 360–373 (RHTKARPTKKRKKR) shows a compositional bias: basic residues. Over residues 374 to 385 (VVDLRKQSKPTD) the composition is skewed to basic and acidic residues. Residues 396-409 (TETSTASTTFSSST) show a composition bias toward low complexity.

This sequence belongs to the MDM34 family. In terms of assembly, component of the ER-mitochondria encounter structure (ERMES) or MDM complex, composed of MMM1, MDM10, MDM12 and MDM34.

The protein localises to the mitochondrion outer membrane. Its function is as follows. Component of the ERMES/MDM complex, which serves as a molecular tether to connect the endoplasmic reticulum (ER) and mitochondria. Components of this complex are involved in the control of mitochondrial shape and protein biogenesis, and function in nonvesicular lipid trafficking between the ER and mitochondria. MDM34 is required for the interaction of the ER-resident membrane protein MMM1 and the outer mitochondrial membrane-resident beta-barrel protein MDM10. The polypeptide is Mitochondrial distribution and morphology protein 34 (Uncinocarpus reesii (strain UAMH 1704)).